A 539-amino-acid polypeptide reads, in one-letter code: Protein mushroom body miniature (539 aa).

Polar residues predominate over residues 1–11 (MHNSGGQSGWN). The tract at residues 1–345 (MHNSGGQSGW…EDDKKARKQK (345 aa)) is disordered. Positions 67-79 (KFRDPQQELDNHQ) are enriched in basic and acidic residues. The segment covering 80–89 (PNKRGGRRNR) has biased composition (basic residues). Over residues 90-101 (GGGGGGGGWGGR) the composition is skewed to gly residues. A compositionally biased stretch (basic and acidic residues) spans 199–208 (IKKEKEMEHK). The span at 268–289 (VASTPKPKAVKPVSSSDSSTSD) shows a compositional bias: low complexity. Ser288 and Ser290 each carry phosphoserine. 2 positions are modified to phosphothreonine: Thr292 and Thr327. A compositionally biased stretch (acidic residues) spans 327–336 (TDEEESTEPE). Ser332 bears the Phosphoserine mark. Thr333 carries the post-translational modification Phosphothreonine. 2 consecutive CCHC-type zinc fingers follow at residues 354–367 (CGICDKKGHTSFQC) and 371–386 (CRNCSGSYHGLKNCPN). The segment at 421 to 513 (VTAPVSAKPK…AASLPPQVFP (93 aa)) is disordered. The segment covering 428-447 (KPKKDKKASIKKIKKSSQKR) has biased composition (basic residues). A compositionally biased stretch (acidic residues) spans 456 to 480 (DEEDDEEDDDEDEDDSSESDDSESS).

May be phosphorylated in vivo by CkIIalpha. mbm and CkIIalpha colocalize to the nucleolus and mbm is phosphorylated in vitro by CkIIalpha. As to expression, shows widespread expression in third instar larval brain with no apparent difference between males and females (at protein level). Detected at low levels in the mushroom body neuropil and is also expressed in many cells of the brain outside the mushroom body (at protein level). Not detected in third instar larval brain cells in anaphase (at protein level).

It localises to the nucleus. The protein resides in the nucleolus. The protein localises to the cytoplasm. Functionally, required for small ribosomal subunit biogenesis in neuroblasts. Plays a role in mushroom body development. The chain is Protein mushroom body miniature from Drosophila melanogaster (Fruit fly).